A 264-amino-acid chain; its full sequence is Undecaprenyl-diphosphatase (264 aa).

Transmembrane regions (helical) follow at residues 1 to 21, 40 to 60, 81 to 101, 109 to 129, 140 to 160, 183 to 203, 211 to 231, and 239 to 259; these read MTVF…FLPI, GLTF…AFFW, MFWY…LLEE, TPLL…WADA, ISMA…IPGV, FSFL…LKDI, AFIT…SFLL, and FALF…LAAA.

This sequence belongs to the UppP family.

It is found in the cell membrane. It carries out the reaction di-trans,octa-cis-undecaprenyl diphosphate + H2O = di-trans,octa-cis-undecaprenyl phosphate + phosphate + H(+). In terms of biological role, catalyzes the dephosphorylation of undecaprenyl diphosphate (UPP). Confers resistance to bacitracin. The chain is Undecaprenyl-diphosphatase from Pelotomaculum thermopropionicum (strain DSM 13744 / JCM 10971 / SI).